A 137-amino-acid polypeptide reads, in one-letter code: Basic phospholipase A2 homolog bothropstoxin-I (137 aa).

The N-terminal stretch at 1–16 (MRTLWIMAVLLVGVEG) is a signal peptide. 7 disulfides stabilise this stretch: C42–C131, C44–C60, C59–C111, C65–C137, C66–C104, C73–C97, and C91–C102. The important for membrane-damaging activities in eukaryotes and bacteria; heparin-binding stretch occupies residues 121-133 (KKYRYHLKPFCKK).

Belongs to the phospholipase A2 family. Group II subfamily. K49 sub-subfamily. In terms of assembly, homodimer; non-covalently linked (probable alternative/compact dimer conformation in solution). Binds to heparin. As to expression, expressed by the venom gland.

It is found in the secreted. With respect to regulation, suramin inhibits both myotoxic and muscle-paralyzing activities. Chicoric acid inhibits myotoxic activity. Zinc ions inhibits the myotoxic activity and the neuromuscular blockade. Heparin inhibits myotoxic activity. Snake venom phospholipase A2 homolog that lacks enzymatic activity. Shows local myotoxic activity. Induces inflammation, since it induces edema and leukocytes infiltration. In addition, it induces NLRP3 NLRP3, ASC (PYCARD), caspase-1 (CASP1), and IL-1beta (IL1B) gene expression in the gastrocnemius muscle, showing that it is able to activate NLRP3 inflammasome. It also damages artificial and myoblast membranes by a calcium-independent mechanism, has bactericidal activity, and induces neuromuscular blockade. A model of myotoxic mechanism has been proposed: an apo Lys49-PLA2 is activated by the entrance of a hydrophobic molecule (e.g. fatty acid) at the hydrophobic channel of the protein leading to a reorientation of a monomer. This reorientation causes a transition between 'inactive' to 'active' states, causing alignment of C-terminal and membrane-docking sites (MDoS) side-by-side and putting the membrane-disruption sites (MDiS) in the same plane, exposed to solvent and in a symmetric position for both monomers. The MDoS region stabilizes the toxin on membrane by the interaction of charged residues with phospholipid head groups. Subsequently, the MDiS region destabilizes the membrane with penetration of hydrophobic residues. This insertion causes a disorganization of the membrane, allowing an uncontrolled influx of ions (i.e. calcium and sodium), and eventually triggering irreversible intracellular alterations and cell death. This chain is Basic phospholipase A2 homolog bothropstoxin-I, found in Bothrops jararacussu (Jararacussu).